Here is a 194-residue protein sequence, read N- to C-terminus: ATP-dependent Clp protease proteolytic subunit (194 aa).

S98 serves as the catalytic Nucleophile. The active site involves H123.

Belongs to the peptidase S14 family. As to quaternary structure, component of the chloroplastic Clp protease core complex.

The protein localises to the plastid. It is found in the cyanelle. It carries out the reaction Hydrolysis of proteins to small peptides in the presence of ATP and magnesium. alpha-casein is the usual test substrate. In the absence of ATP, only oligopeptides shorter than five residues are hydrolyzed (such as succinyl-Leu-Tyr-|-NHMec, and Leu-Tyr-Leu-|-Tyr-Trp, in which cleavage of the -Tyr-|-Leu- and -Tyr-|-Trp bonds also occurs).. In terms of biological role, cleaves peptides in various proteins in a process that requires ATP hydrolysis. Has a chymotrypsin-like activity. Plays a major role in the degradation of misfolded proteins. The sequence is that of ATP-dependent Clp protease proteolytic subunit (clpP-A) from Cyanophora paradoxa.